A 406-amino-acid chain; its full sequence is GTPase Obg (406 aa).

Positions 1–159 (MKFVDEVSIH…RDLKLELKVL (159 aa)) constitute an Obg domain. The interval 127–148 (NTRFKSSTNRAPRQTTPGKPGE) is disordered. Polar residues predominate over residues 129-143 (RFKSSTNRAPRQTTP). Positions 160 to 334 (ADVGLLGLPN…LSQDIMRYLD (175 aa)) constitute an OBG-type G domain. Residues 166-173 (GLPNAGKS), 191-195 (FTTLV), 213-216 (DIPG), 283-286 (NKMD), and 315-317 (SAL) contribute to the GTP site. Ser-173 and Thr-193 together coordinate Mg(2+). Positions 382–406 (AGAVDDDDFDDEEDDGDGPEIFYVP) are disordered. Acidic residues predominate over residues 385–399 (VDDDDFDDEEDDGDG).

It belongs to the TRAFAC class OBG-HflX-like GTPase superfamily. OBG GTPase family. As to quaternary structure, monomer. Mg(2+) serves as cofactor.

It is found in the cytoplasm. An essential GTPase which binds GTP, GDP and possibly (p)ppGpp with moderate affinity, with high nucleotide exchange rates and a fairly low GTP hydrolysis rate. Plays a role in control of the cell cycle, stress response, ribosome biogenesis and in those bacteria that undergo differentiation, in morphogenesis control. In Pseudomonas aeruginosa (strain LESB58), this protein is GTPase Obg.